The primary structure comprises 193 residues: Thioredoxin reductase-like selenoprotein T1a (193 aa).

A signal peptide spans 1-21; sequence MRWLPFSALLLWALCLHSASA. Residues 44 to 47 constitute a cross-link (cysteinyl-selenocysteine (Cys-Sec)); that stretch reads CVSU. A non-standard amino acid (selenocysteine) is located at residue Sec47. The helical transmembrane segment at 83 to 101 threads the bilayer; sequence IASFLSMFKLLLIGVIILG.

It belongs to the SelWTH family. Selenoprotein T subfamily. May contain a selenide-sulfide bond between Cys-44 and Sec-47. This bond is speculated to serve as redox-active pair. As to expression, expressed in embryonic olfactory vesicles and the photoreceptor cell layer of the embryonic retina. Low level in embryonic epiphysis.

Its subcellular location is the endoplasmic reticulum membrane. The catalysed reaction is [thioredoxin]-dithiol + NADP(+) = [thioredoxin]-disulfide + NADPH + H(+). In terms of biological role, selenoprotein with thioredoxin reductase-like oxidoreductase activity. This is Thioredoxin reductase-like selenoprotein T1a from Danio rerio (Zebrafish).